The primary structure comprises 498 residues: Pup deamidase/depupylase (498 aa).

Gly-6–Glu-10 is a binding site for ATP. Glu-8 and Tyr-93 together coordinate Mg(2+). The active-site Proton acceptor is the Asp-95. Glu-100 contributes to the Mg(2+) binding site. Ser-102–Ala-103 is a binding site for ATP. His-156 contacts Mg(2+). Asn-158 and Arg-240 together coordinate ATP. A Mg(2+)-binding site is contributed by His-242.

Belongs to the Pup ligase/Pup deamidase family. Pup deamidase subfamily. ATP serves as cofactor.

The enzyme catalyses [prokaryotic ubiquitin-like protein]-C-terminal-L-glutamine + H2O = [prokaryotic ubiquitin-like protein]-C-terminal-L-glutamate + NH4(+). It participates in protein degradation; proteasomal Pup-dependent pathway. Specifically catalyzes the deamidation of the C-terminal glutamine of the prokaryotic ubiquitin-like protein Pup to glutamate, thereby rendering Pup competent for conjugation. Probably also displays depupylase (DPUP) activity, removing conjugated Pup from target proteins; thus may be involved in the recycling of Pup and may function similarly to deubiquitinases (DUBs) in eukaryotes to prevent or promote proteasomal degradation of certain proteins. This Mycolicibacterium smegmatis (strain ATCC 700084 / mc(2)155) (Mycobacterium smegmatis) protein is Pup deamidase/depupylase (dop).